We begin with the raw amino-acid sequence, 436 residues long: Gamma-glutamyl phosphate reductase (436 aa).

Belongs to the gamma-glutamyl phosphate reductase family.

The protein resides in the cytoplasm. The catalysed reaction is L-glutamate 5-semialdehyde + phosphate + NADP(+) = L-glutamyl 5-phosphate + NADPH + H(+). The protein operates within amino-acid biosynthesis; L-proline biosynthesis; L-glutamate 5-semialdehyde from L-glutamate: step 2/2. Functionally, catalyzes the NADPH-dependent reduction of L-glutamate 5-phosphate into L-glutamate 5-semialdehyde and phosphate. The product spontaneously undergoes cyclization to form 1-pyrroline-5-carboxylate. This Prochlorococcus marinus (strain MIT 9301) protein is Gamma-glutamyl phosphate reductase.